Here is a 263-residue protein sequence, read N- to C-terminus: MENKNVIQKMREKTPLIHCITNYVTINDCANILLSFGASPAMCEAYDEVYDFVSISSALYINLGTLTKEQETAAVLASISAKNHNVPVVIDPVGCPAIKRKVEVINRIAEVGRIDIIKGNIGEIKFLAGMDSETRGVDSLDNGENALDACTQLAKKYNCIVAATGQKDFVSDGKRGSVIKNGTEMLTKVTGAGCMLGALCAATCANFEDKLVSTTAAILSMNIAGEKAYEKAQLPGSFRIALIDNIYMISDEEIWERGNVEWK.

M42 lines the substrate pocket. Positions 118 and 164 each coordinate ATP. G191 is a substrate binding site.

This sequence belongs to the Thz kinase family. Mg(2+) is required as a cofactor.

It catalyses the reaction 5-(2-hydroxyethyl)-4-methylthiazole + ATP = 4-methyl-5-(2-phosphooxyethyl)-thiazole + ADP + H(+). It participates in cofactor biosynthesis; thiamine diphosphate biosynthesis; 4-methyl-5-(2-phosphoethyl)-thiazole from 5-(2-hydroxyethyl)-4-methylthiazole: step 1/1. In terms of biological role, catalyzes the phosphorylation of the hydroxyl group of 4-methyl-5-beta-hydroxyethylthiazole (THZ). This chain is Hydroxyethylthiazole kinase 1, found in Clostridium botulinum (strain Okra / Type B1).